The sequence spans 274 residues: Methionine aminopeptidase B (274 aa).

A substrate-binding site is contributed by histidine 102. 3 residues coordinate a divalent metal cation: aspartate 120, aspartate 131, and histidine 194. Histidine 201 serves as a coordination point for substrate. 2 residues coordinate a divalent metal cation: glutamate 227 and glutamate 258.

The protein belongs to the peptidase M24A family. Methionine aminopeptidase type 1 subfamily. In terms of assembly, monomer. The cofactor is Co(2+). Zn(2+) serves as cofactor. It depends on Mn(2+) as a cofactor. Requires Fe(2+) as cofactor.

It catalyses the reaction Release of N-terminal amino acids, preferentially methionine, from peptides and arylamides.. Removes the N-terminal methionine from nascent proteins. The N-terminal methionine is often cleaved when the second residue in the primary sequence is small and uncharged (Met-Ala-, Cys, Gly, Pro, Ser, Thr, or Val). Requires deformylation of the N(alpha)-formylated initiator methionine before it can be hydrolyzed. This chain is Methionine aminopeptidase B, found in Synechocystis sp. (strain ATCC 27184 / PCC 6803 / Kazusa).